Consider the following 28-residue polypeptide: M-poneritoxin-Dq4b/U1-poneritoxin-Dq4c/U1-poneritoxin-Dq4d (28 aa).

Met-20 is subject to Methionine sulfoxide; in form U1-PONTX-Dq4d. Ala-28 is modified (alanine amide; in form Dq-1362 and U1-PONTX-Dq4d).

Post-translationally, occurs in 3 forms, M-PONTX-Dq4b has an amidated Ala-28, U1-PONTX-Dq4d has an amidated Ala-28 and an oxidized Met-20, U1-PONTX-Dq4c has no modifications at either Met-20 or Ala-28. As to expression, expressed by the venom gland.

The protein resides in the secreted. Its function is as follows. M-poneritoxin-Dq4b: this synthetic peptide has antimicrobial activity against Gram-positive bacteria B.amyloliquefacies S499 (MIC=0.1 mM), L.monocytogenes 2231 and S.aureus ATCC 29213, against Gram-negative bacteria P.putida BTP1, P.aeruginosa PaO1 and E.coli ATCC 10536, and against the fungi S.cerevisiae, R.mucilaginosa and C.cucumerinum. Not active against the fungi F.oxysporum and B.cinerea. The polypeptide is M-poneritoxin-Dq4b/U1-poneritoxin-Dq4c/U1-poneritoxin-Dq4d (Dinoponera quadriceps (South American ant)).